Reading from the N-terminus, the 441-residue chain is Ribulose bisphosphate carboxylase large chain (441 aa).

Lys5 is modified (N6,N6,N6-trimethyllysine). Thr164 contributes to the substrate binding site. The Proton acceptor role is filled by Lys166. Lys168 is a substrate binding site. Mg(2+)-binding residues include Lys192, Asp194, and Glu195. Lys192 carries the post-translational modification N6-carboxylysine. Residue His285 is the Proton acceptor of the active site. Substrate-binding residues include Arg286, His318, and Ser370.

This sequence belongs to the RuBisCO large chain family. Type I subfamily. In terms of assembly, heterohexadecamer of 8 large chains and 8 small chains; disulfide-linked. The disulfide link is formed within the large subunit homodimers. Requires Mg(2+) as cofactor. The disulfide bond which can form in the large chain dimeric partners within the hexadecamer appears to be associated with oxidative stress and protein turnover.

The protein localises to the plastid. It is found in the chloroplast. It carries out the reaction 2 (2R)-3-phosphoglycerate + 2 H(+) = D-ribulose 1,5-bisphosphate + CO2 + H2O. The catalysed reaction is D-ribulose 1,5-bisphosphate + O2 = 2-phosphoglycolate + (2R)-3-phosphoglycerate + 2 H(+). Functionally, ruBisCO catalyzes two reactions: the carboxylation of D-ribulose 1,5-bisphosphate, the primary event in carbon dioxide fixation, as well as the oxidative fragmentation of the pentose substrate in the photorespiration process. Both reactions occur simultaneously and in competition at the same active site. This chain is Ribulose bisphosphate carboxylase large chain, found in Hemionitis engywookii (Fendler's false cloak fern).